Consider the following 416-residue polypeptide: Casein kinase I isoform epsilon (416 aa).

The Protein kinase domain occupies 9–277 (YRLGRKIGSG…YLRQLFRNLF (269 aa)). Residues 15–23 (IGSGSFGDI) and Lys38 each bind ATP. Catalysis depends on Asp128, which acts as the Proton acceptor. Basic and acidic residues predominate over residues 301-318 (PEDVDRERREHEREERMG). A disordered region spans residues 301–416 (PEDVDRERRE…TSVPFDHLGK (116 aa)). Phosphoserine is present on residues Ser343 and Ser354. Polar residues predominate over residues 351–365 (TPASRIQQTGNTSPR). Thr362 carries the phosphothreonine modification. Residue Ser363 is modified to Phosphoserine. Position 382 is an omega-N-methylarginine (Arg382). A phosphoserine mark is found at Ser389, Ser405, and Ser408.

Belongs to the protein kinase superfamily. CK1 Ser/Thr protein kinase family. Casein kinase I subfamily. In terms of assembly, monomer. Component of the circadian core oscillator, which includes the CRY proteins, CLOCK, or NPAS2, ARTNL/BMAL1 or ARTNL2/BMAL2, CSNK1D and/or CSNK1E, TIMELESS and the PER proteins. Interacts with ANKRD6. Interacts with PER1. Interacts with DBNDD2, LRP5, LRP6 and SOCS3. Interacts with SNAI1 (via zinc fingers). Interacts with DDX3X; this interaction greatly enhances CSNK1E affinity for ATP and DVL2 phosphorylation, but inhibits DDX3X ATPase/helicase activity. In the presence of RNA, the interaction is decreased. Interacts with FAM83A, FAM83B, FAM83E and FAM83H (via DUF1669). Post-translationally, autophosphorylated. Partially dephosphorylated by PPP5C. May be dephosphorylated by PP1. Expressed in all tissues examined, including brain, heart, lung, liver, pancreas, kidney, placenta and skeletal muscle. Expressed in monocytes and lymphocytes but not in granulocytes.

Its subcellular location is the cytoplasm. It is found in the nucleus. The catalysed reaction is L-seryl-[protein] + ATP = O-phospho-L-seryl-[protein] + ADP + H(+). It catalyses the reaction L-threonyl-[protein] + ATP = O-phospho-L-threonyl-[protein] + ADP + H(+). Phosphorylation leads to a decrease in the catalytic activity. Casein kinases are operationally defined by their preferential utilization of acidic proteins such as caseins as substrates. Participates in Wnt signaling. Phosphorylates DVL1. Phosphorylates DVL2. Phosphorylates NEDD9/HEF1. Central component of the circadian clock. In balance with PP1, determines the circadian period length, through the regulation of the speed and rhythmicity of PER1 and PER2 phosphorylation. Controls PER1 and PER2 nuclear transport and degradation. Inhibits cytokine-induced granuloytic differentiation. In Mus musculus (Mouse), this protein is Casein kinase I isoform epsilon (Csnk1e).